Reading from the N-terminus, the 96-residue chain is Large ribosomal subunit protein bL27 (96 aa).

The tract at residues 12–33 (HKGGGSSANGRNSAGRRLGAKA) is disordered. Positions 19–28 (ANGRNSAGRR) are enriched in low complexity.

This sequence belongs to the bacterial ribosomal protein bL27 family.

The polypeptide is Large ribosomal subunit protein bL27 (Lactobacillus helveticus (strain DPC 4571)).